The primary structure comprises 244 residues: rRNA adenine N-6-methyltransferase (244 aa).

Positions 11, 13, 38, 59, 84, and 101 each coordinate S-adenosyl-L-methionine.

This sequence belongs to the class I-like SAM-binding methyltransferase superfamily. rRNA adenine N(6)-methyltransferase family.

Functionally, involved in erythromycin resistance. In Lysinibacillus sphaericus (Bacillus sphaericus), this protein is rRNA adenine N-6-methyltransferase (ermG).